A 205-amino-acid polypeptide reads, in one-letter code: Putative glutamine amidotransferase-like protein L716 (205 aa).

One can recognise a Glutamine amidotransferase type-1 domain in the interval 1–176; sequence MLLIIQNGYI…SNHIESYDYA (176 aa). Residues Cys82, His155, and Asp157 each act as for GATase activity in the active site.

The chain is Putative glutamine amidotransferase-like protein L716 from Acanthamoeba polyphaga mimivirus (APMV).